The primary structure comprises 263 residues: Probable ABC transporter permease protein ycf63 (263 aa).

6 consecutive transmembrane segments (helical) span residues 43 to 63 (LVGPGSLNITLLTACFISMVF), 82 to 102 (AVIVIAFTRELSPVLTAVIIA), 136 to 156 (LVFPKVAACCIMLPILSTISL), 159 to 179 (SIAISIFVSFVMYGIPSSIFL), 199 to 219 (LCFGTIIAFISCQWGLTSSGG), and 230 to 250 (SVVTILLTIFITDFILSYFMF).

The protein belongs to the MlaE permease family.

The protein resides in the plastid. Its subcellular location is the chloroplast membrane. Could be part of an ABC transporter complex. The polypeptide is Probable ABC transporter permease protein ycf63 (ycf63) (Porphyra purpurea (Red seaweed)).